A 161-amino-acid polypeptide reads, in one-letter code: Cyclic pyranopterin monophosphate synthase (161 aa).

Substrate contacts are provided by residues 78–80 (LCH) and 116–117 (ME). Asp-131 is an active-site residue.

The protein belongs to the MoaC family. In terms of assembly, homohexamer; trimer of dimers.

It carries out the reaction (8S)-3',8-cyclo-7,8-dihydroguanosine 5'-triphosphate = cyclic pyranopterin phosphate + diphosphate. The protein operates within cofactor biosynthesis; molybdopterin biosynthesis. Catalyzes the conversion of (8S)-3',8-cyclo-7,8-dihydroguanosine 5'-triphosphate to cyclic pyranopterin monophosphate (cPMP). This Bordetella pertussis (strain Tohama I / ATCC BAA-589 / NCTC 13251) protein is Cyclic pyranopterin monophosphate synthase.